Consider the following 56-residue polypeptide: Ribosome biogenesis protein Nop10 (56 aa).

Belongs to the NOP10 family.

Functionally, involved in ribosome biogenesis; more specifically in 18S rRNA pseudouridylation and in cleavage of pre-rRNA. The polypeptide is Ribosome biogenesis protein Nop10 (Methanococcoides burtonii (strain DSM 6242 / NBRC 107633 / OCM 468 / ACE-M)).